Consider the following 412-residue polypeptide: Multifunctional CCA protein (412 aa).

The ATP site is built by glycine 8 and arginine 11. CTP-binding residues include glycine 8 and arginine 11. 2 residues coordinate Mg(2+): aspartate 21 and aspartate 23. Positions 91, 137, and 140 each coordinate ATP. Residues arginine 91, arginine 137, and arginine 140 each coordinate CTP. The 102-residue stretch at 228 to 329 (TGIHTLMTLS…VKLFDSIDAW (102 aa)) folds into the HD domain.

Belongs to the tRNA nucleotidyltransferase/poly(A) polymerase family. Bacterial CCA-adding enzyme type 1 subfamily. As to quaternary structure, monomer. Can also form homodimers and oligomers. It depends on Mg(2+) as a cofactor. Ni(2+) is required as a cofactor.

It carries out the reaction a tRNA precursor + 2 CTP + ATP = a tRNA with a 3' CCA end + 3 diphosphate. The catalysed reaction is a tRNA with a 3' CCA end + 2 CTP + ATP = a tRNA with a 3' CCACCA end + 3 diphosphate. Its function is as follows. Catalyzes the addition and repair of the essential 3'-terminal CCA sequence in tRNAs without using a nucleic acid template. Adds these three nucleotides in the order of C, C, and A to the tRNA nucleotide-73, using CTP and ATP as substrates and producing inorganic pyrophosphate. tRNA 3'-terminal CCA addition is required both for tRNA processing and repair. Also involved in tRNA surveillance by mediating tandem CCA addition to generate a CCACCA at the 3' terminus of unstable tRNAs. While stable tRNAs receive only 3'-terminal CCA, unstable tRNAs are marked with CCACCA and rapidly degraded. The sequence is that of Multifunctional CCA protein from Escherichia coli O157:H7.